We begin with the raw amino-acid sequence, 320 residues long: Putative FBD-associated F-box protein At3g60710 (320 aa).

Positions 2-48 (EDLISQLPNELLQEILLNLPTSESVRTSVLPTRWRNLWQSVPGLYLI) constitute an F-box domain. The FBD domain maps to 212–268 (MEEIASSPVPKCLQTSIENVKIKMTPKADQEKSRKAETEVANYILENATLLKLTLWL).

The sequence is that of Putative FBD-associated F-box protein At3g60710 from Arabidopsis thaliana (Mouse-ear cress).